Reading from the N-terminus, the 493-residue chain is Cysteine--tRNA ligase (493 aa).

Cys-29 provides a ligand contact to Zn(2+). A 'HIGH' region motif is present at residues 31 to 41; the sequence is VTVYDLSHIGH. Zn(2+)-binding residues include Cys-209, His-234, and Glu-238. A 'KMSKS' region motif is present at residues 266–270; sequence KMSKS. Lys-269 lines the ATP pocket.

Belongs to the class-I aminoacyl-tRNA synthetase family. Monomer. Requires Zn(2+) as cofactor.

Its subcellular location is the cytoplasm. It catalyses the reaction tRNA(Cys) + L-cysteine + ATP = L-cysteinyl-tRNA(Cys) + AMP + diphosphate. In Syntrophobacter fumaroxidans (strain DSM 10017 / MPOB), this protein is Cysteine--tRNA ligase.